Here is a 295-residue protein sequence, read N- to C-terminus: Ribosomal protein L11 methyltransferase (295 aa).

Residues Thr145, Gly166, Asp188, and Asn230 each coordinate S-adenosyl-L-methionine.

The protein belongs to the methyltransferase superfamily. PrmA family.

The protein localises to the cytoplasm. The catalysed reaction is L-lysyl-[protein] + 3 S-adenosyl-L-methionine = N(6),N(6),N(6)-trimethyl-L-lysyl-[protein] + 3 S-adenosyl-L-homocysteine + 3 H(+). Functionally, methylates ribosomal protein L11. The chain is Ribosomal protein L11 methyltransferase from Haemophilus influenzae (strain PittEE).